Consider the following 186-residue polypeptide: Biofilm operon icaADBC HTH-type negative transcriptional regulator IcaR (186 aa).

One can recognise an HTH tetR-type domain in the interval 1-59 (MKDKIIDNAITLFSEKGYDGTTLDDIAKSVNIKKASLYYHFDSKKSIYEQSVKCCFDYL). Positions 22–41 (TLDDIAKSVNIKKASLYYHF) form a DNA-binding region, H-T-H motif.

As to quaternary structure, homodimer.

In terms of biological role, represses transcription of the icaADBC operon necessary for biofilm production. This Staphylococcus aureus (strain NCTC 8325 / PS 47) protein is Biofilm operon icaADBC HTH-type negative transcriptional regulator IcaR (icaR).